The sequence spans 374 residues: Ribosomal RNA large subunit methyltransferase G (374 aa).

This sequence belongs to the methyltransferase superfamily. RlmG family.

The protein localises to the cytoplasm. The enzyme catalyses guanosine(1835) in 23S rRNA + S-adenosyl-L-methionine = N(2)-methylguanosine(1835) in 23S rRNA + S-adenosyl-L-homocysteine + H(+). In terms of biological role, specifically methylates the guanine in position 1835 (m2G1835) of 23S rRNA. This is Ribosomal RNA large subunit methyltransferase G from Pseudomonas fluorescens (strain ATCC BAA-477 / NRRL B-23932 / Pf-5).